Reading from the N-terminus, the 199-residue chain is 7-methyl-GTP pyrophosphatase (199 aa).

Aspartate 74 serves as the catalytic Proton acceptor.

Belongs to the Maf family. YceF subfamily. The cofactor is a divalent metal cation.

It is found in the cytoplasm. It catalyses the reaction N(7)-methyl-GTP + H2O = N(7)-methyl-GMP + diphosphate + H(+). Nucleoside triphosphate pyrophosphatase that hydrolyzes 7-methyl-GTP (m(7)GTP). May have a dual role in cell division arrest and in preventing the incorporation of modified nucleotides into cellular nucleic acids. In Albidiferax ferrireducens (strain ATCC BAA-621 / DSM 15236 / T118) (Rhodoferax ferrireducens), this protein is 7-methyl-GTP pyrophosphatase.